The following is a 109-amino-acid chain: Nucleoid-associated protein LJ_0424 (109 aa).

The protein belongs to the YbaB/EbfC family. Homodimer.

The protein localises to the cytoplasm. It is found in the nucleoid. Its function is as follows. Binds to DNA and alters its conformation. May be involved in regulation of gene expression, nucleoid organization and DNA protection. The protein is Nucleoid-associated protein LJ_0424 of Lactobacillus johnsonii (strain CNCM I-12250 / La1 / NCC 533).